Reading from the N-terminus, the 103-residue chain is SOSS complex subunit C (103 aa).

Belongs to the SOSS-C family. Belongs to the multiprotein complex Integrator. Component of the SOSS complex, composed of SOSS-B (SOSS-B1/NABP2 or SOSS-B2/NABP1), SOSS-A/INTS3 and SOSS-C/INIP.

The protein resides in the nucleus. Functionally, component of the SOSS complex, a multiprotein complex that functions downstream of the MRN complex to promote DNA repair and G2/M checkpoint. The SOSS complex associates with single-stranded DNA at DNA lesions and influences diverse endpoints in the cellular DNA damage response including cell-cycle checkpoint activation, recombinational repair and maintenance of genomic stability. Required for efficient homologous recombination-dependent repair of double-strand breaks (DSBs). This chain is SOSS complex subunit C (INIP), found in Gallus gallus (Chicken).